The following is a 190-amino-acid chain: dTTP/UTP pyrophosphatase (190 aa).

D68 (proton acceptor) is an active-site residue.

The protein belongs to the Maf family. YhdE subfamily. A divalent metal cation serves as cofactor.

It localises to the cytoplasm. It carries out the reaction dTTP + H2O = dTMP + diphosphate + H(+). The catalysed reaction is UTP + H2O = UMP + diphosphate + H(+). Functionally, nucleoside triphosphate pyrophosphatase that hydrolyzes dTTP and UTP. May have a dual role in cell division arrest and in preventing the incorporation of modified nucleotides into cellular nucleic acids. This Acholeplasma laidlawii (strain PG-8A) protein is dTTP/UTP pyrophosphatase.